Here is a 502-residue protein sequence, read N- to C-terminus: RxLR effector protein BLN06 (502 aa).

A signal peptide spans 1–20 (MTLLHCWLLLVGHLASTAYA). N-linked (GlcNAc...) asparagine glycosylation is present at Asn38. Residues 50 to 53 (LEER) carry the dEER motif.

Belongs to the RxLR effector family.

The protein resides in the secreted. The protein localises to the host cell membrane. In terms of biological role, secreted effector that triggers a robust hypersensitive response (HR) in Lactuca serriola LS102. The response to BLN06 was visible as chlorosis but not as strong necrosis. The polypeptide is RxLR effector protein BLN06 (Bremia lactucae (Lettuce downy mildew)).